A 515-amino-acid chain; its full sequence is Histidine ammonia-lyase (515 aa).

The segment at residues 142 to 144 is a cross-link (5-imidazolinone (Ala-Gly)); sequence ASG. Residue Ser143 is modified to 2,3-didehydroalanine (Ser).

The protein belongs to the PAL/histidase family. Post-translationally, contains an active site 4-methylidene-imidazol-5-one (MIO), which is formed autocatalytically by cyclization and dehydration of residues Ala-Ser-Gly.

It is found in the cytoplasm. It carries out the reaction L-histidine = trans-urocanate + NH4(+). The protein operates within amino-acid degradation; L-histidine degradation into L-glutamate; N-formimidoyl-L-glutamate from L-histidine: step 1/3. In Methylobacterium nodulans (strain LMG 21967 / CNCM I-2342 / ORS 2060), this protein is Histidine ammonia-lyase.